Reading from the N-terminus, the 238-residue chain is Enolase-phosphatase E1 (238 aa).

Belongs to the HAD-like hydrolase superfamily. MasA/MtnC family. Monomer. Mg(2+) is required as a cofactor.

It catalyses the reaction 5-methylsulfanyl-2,3-dioxopentyl phosphate + H2O = 1,2-dihydroxy-5-(methylsulfanyl)pent-1-en-3-one + phosphate. Its pathway is amino-acid biosynthesis; L-methionine biosynthesis via salvage pathway; L-methionine from S-methyl-5-thio-alpha-D-ribose 1-phosphate: step 3/6. It functions in the pathway amino-acid biosynthesis; L-methionine biosynthesis via salvage pathway; L-methionine from S-methyl-5-thio-alpha-D-ribose 1-phosphate: step 4/6. Bifunctional enzyme that catalyzes the enolization of 2,3-diketo-5-methylthiopentyl-1-phosphate (DK-MTP-1-P) into the intermediate 2-hydroxy-3-keto-5-methylthiopentenyl-1-phosphate (HK-MTPenyl-1-P), which is then dephosphorylated to form the acireductone 1,2-dihydroxy-3-keto-5-methylthiopentene (DHK-MTPene). This chain is Enolase-phosphatase E1, found in Synechococcus elongatus (strain ATCC 33912 / PCC 7942 / FACHB-805) (Anacystis nidulans R2).